A 567-amino-acid polypeptide reads, in one-letter code: MSKPTADNAPNAAAKGAPAVPANFLRPIIQADLDSGKHSSIVTRFPPEPNGYLHIGHAKSICVNFGLAKEFGGVCHLRFDDTNPAKEDQEYIDAIQSDVKWLGFEWGGDVRYASDYFDQLHDWAVELIKRGKAYVCDLTPEQAKEYRGNLKEPGKNSPFRERSVEENLDLFARMKAGEFKDGERVLRAKIDMASPNMNLRDPILYRIRHAHHHQTGDKWCIYPNYDFTHGQSDAIEGITHSICTLEFEGHRPLYDWFLDNLPVPAHPRQYEFSRLNLNYTITSKRKLKQLVDEKHVDAWDDPRMSTLSGFRRRGYTPASIRNFCEMIGTNRSDGVVDMSMLEFSIRDDLDRTAPRAMCVLRPLKVVITNYPEGQVEQLELPRHPKEDMGVRVLPFSRELYIDRDDFMEEPPKGYKRLEPAGEVRLRGSYVIRADEAIKDADGNIVELRCSYDPDTLGKNPEGRKVKGVIHWVPAEGSVECEVRLYDRLFRSPNPEKTEEGGSFLDNINPASLQVLSGCRAEPSLAQAQPEDRFQFEREGYFCADLKDSQPGRPVFNRTVTLRDSWGS.

The 'HIGH' region signature appears at 47–57 (PEPNGYLHIGH). ATP-binding positions include 48–50 (EPN) and 54–60 (HIGHAKS). L-glutamine contacts are provided by Asp80 and Tyr225. Residues Thr244 and 274-275 (RL) contribute to the ATP site. Positions 281 to 285 (ITSKR) match the 'KMSKS' region motif.

The protein belongs to the class-I aminoacyl-tRNA synthetase family. In terms of assembly, monomer.

The protein localises to the cytoplasm. It catalyses the reaction tRNA(Gln) + L-glutamine + ATP = L-glutaminyl-tRNA(Gln) + AMP + diphosphate. This is Glutamine--tRNA ligase from Pseudomonas putida (strain ATCC 47054 / DSM 6125 / CFBP 8728 / NCIMB 11950 / KT2440).